The primary structure comprises 496 residues: Apolipoprotein N-acyltransferase (496 aa).

The next 6 membrane-spanning stretches (helical) occupy residues 6-26 (IICFLLGILSGLVFAPTFFIP), 50-70 (FGYLFGFGHFLSGMYWISIGV), 77-97 (FWWAIPFALFGLPIILAFFIS), 114-134 (LIFCLLWVLFEWIRSWICTGL), 148-168 (ILIQPLSITGIYGLSFIVIYI), and 183-203 (LKILLASSMLILTVMVIYGAM). The CN hydrolase domain occupies 220–464 (VQPSIPQTAK…QGLIPQKLTT (245 aa)). Glu259 acts as the Proton acceptor in catalysis. The active site involves Lys322. Cys372 functions as the Nucleophile in the catalytic mechanism. Residues 474–494 (FAMLLPIVFILLIHYLLSLIF) form a helical membrane-spanning segment.

Belongs to the CN hydrolase family. Apolipoprotein N-acyltransferase subfamily.

The protein resides in the cell inner membrane. It catalyses the reaction N-terminal S-1,2-diacyl-sn-glyceryl-L-cysteinyl-[lipoprotein] + a glycerophospholipid = N-acyl-S-1,2-diacyl-sn-glyceryl-L-cysteinyl-[lipoprotein] + a 2-acyl-sn-glycero-3-phospholipid + H(+). Its pathway is protein modification; lipoprotein biosynthesis (N-acyl transfer). Its function is as follows. Catalyzes the phospholipid dependent N-acylation of the N-terminal cysteine of apolipoprotein, the last step in lipoprotein maturation. This Rickettsia typhi (strain ATCC VR-144 / Wilmington) protein is Apolipoprotein N-acyltransferase.